The sequence spans 1047 residues: Ras GTPase-activating protein 1 (1047 aa).

At Met-1 the chain carries N-acetylmethionine. The 92-residue stretch at 181–272 folds into the SH2 1 domain; it reads WYHGKLDRTI…LKGEKLLYPV (92 aa). Positions 279 to 341 constitute an SH3 domain; that stretch reads EDRRRVRAIL…VEDLVEEVGR (63 aa). The 91-residue stretch at 351–441 folds into the SH2 2 domain; it reads WFHGKISKQE…VEGYYLKEPV (91 aa). Residues 474-577 enclose the PH domain; the sequence is NIVKKGYLLK…WMKGLQAFCN (104 aa). The C2 domain maps to 577–690; sequence NLRKSSPGTS…QKGHATDEWF (114 aa). Residue Tyr-615 is modified to Phosphotyrosine. Positions 764–974 constitute a Ras-GAP domain; the sequence is KLESLLLCTL…HRMIMFLDEL (211 aa). Ser-831 is modified (phosphoserine).

Interacts with SQSTM1. Interacts with SPSB1; the interaction does not promote degradation. Interacts with CAV2 (tyrosine phosphorylated form). Directly interacts with NCK1. Interacts with PDGFRB (tyrosine phosphorylated). Interacts (via SH2 domain) with the 'Tyr-9' phosphorylated form of PDPK1. Interacts with tyrosine-phosphorylated EPHB4. The N-terminus is blocked. Post-translationally, phosphorylated by SRC and LCK. The phosphorylation SRC inhibits its ability to stimulate the Ras-GTPase activity, whereas phosphorylation by LCK does not display any effect on stimulation activity. In terms of tissue distribution, in placental villi, detected only in the trophoblast layer (cytotrophoblast and syncytiotrophoblast). Not detected in stromal, endothelial or Hofbauer cells (at protein level).

The protein localises to the cytoplasm. Functionally, inhibitory regulator of the Ras-cyclic AMP pathway. Stimulates the GTPase of normal but not oncogenic Ras p21; this stimulation may be further increased in the presence of NCK1. In Homo sapiens (Human), this protein is Ras GTPase-activating protein 1 (RASA1).